The chain runs to 227 residues: Cytidylate kinase (227 aa).

Residue glycine 12–threonine 20 participates in ATP binding.

It belongs to the cytidylate kinase family. Type 1 subfamily.

It localises to the cytoplasm. It catalyses the reaction CMP + ATP = CDP + ADP. It carries out the reaction dCMP + ATP = dCDP + ADP. This chain is Cytidylate kinase, found in Escherichia fergusonii (strain ATCC 35469 / DSM 13698 / CCUG 18766 / IAM 14443 / JCM 21226 / LMG 7866 / NBRC 102419 / NCTC 12128 / CDC 0568-73).